Here is a 137-residue protein sequence, read N- to C-terminus: Large ribosomal subunit protein uL16 (137 aa).

Belongs to the universal ribosomal protein uL16 family. Part of the 50S ribosomal subunit.

Binds 23S rRNA and is also seen to make contacts with the A and possibly P site tRNAs. The protein is Large ribosomal subunit protein uL16 of Streptococcus equi subsp. zooepidemicus (strain H70).